The sequence spans 116 residues: Somatostatin (116 aa).

A signal peptide spans 1 to 24 (MLSCRLQCALAALSIVLALGGVTG). Residues 25-88 (APSDPRLRQF…QDEMRLELQR (64 aa)) constitute a propeptide that is removed on maturation. Alanine amide is present on A43. Residues 62-99 (QTENDALEPEDLSQAAEQDEMRLELQRSANSNPAMAPR) are disordered. C105 and C116 form a disulfide bridge.

The protein belongs to the somatostatin family. In terms of processing, C-terminal amidation of the neuronostatin peptide is required for its biological activity, including for the regulation of mean arterial pressure. In terms of tissue distribution, expressed in the pancreas and the spleen (at protein level).

The protein resides in the secreted. In terms of biological role, inhibits the secretion of pituitary hormones, including that of growth hormone/somatotropin (GH1), PRL, ACTH, luteinizing hormone (LH) and TSH. Also impairs ghrelin- and GnRH-stimulated secretion of GH1 and LH; the inhibition of ghrelin-stimulated secretion of GH1 can be further increased by neuronostatin. May enhance low-glucose-induced glucagon release by pancreatic alpha cells. This effect may be mediated by binding to GPR107 and PKA activation. May regulate cardiac contractile function. May compromise cardiomyocyte viability. In the central nervous system, may impair memory retention and may affect hippocampal excitability. May also have anxiolytic and anorexigenic effects. May play a role in arterial pressure regulation. May inhibit basal, but not ghrelin- or GnRH-stimulated secretion of GH1 or LH, but does not affect the release of other pituitary hormones, including PRL, ACTH, FSH or TSH. Potentiates inhibitory action of somatostatin on ghrelin-stimulated secretion of GH1, but not that on GnRH-stimulated secretion of LH. This is Somatostatin (SST) from Sus scrofa (Pig).